A 983-amino-acid chain; its full sequence is MPNLEPAVVVPTSEAIAVDLTKLEEKLAPADSFLDRHLGPGETEQRQMLQTLGFDTLGDLIDQAVPPAIRFPRSLQLPASQSEYGAIAQLKSIASKNQVFRSYIGMGYYDTITPPVIQRNILENPGWYTAYTPYQAEIAQGRLEALLNFQTMVMDLTGLEIANASLLDEGTAAAEAMALSYGVSKSKANAFFVAQDCHPQTIEVIKTRANPLGIEVIVGDHHTFSFSTSIFGALLQYPATDGAVYDYRSFIDKAHQHQALVTLAADPLSLTLLTPPGELGADIAVGSTQRFGIPLGYGGPHAAYFATKAEYQRKMPGRIVGVSKDAHGNPALRLALQTREQHIRRDKATSNICTAQVLLAVMASMYGVYHGSTGLKNIALRIHQLTVLLAIGLKRLNYSLNNDYFFDTLRVGVGEQSAPAILKAAEGRGINLRPLVPGEVGISLDETVTVQDLLDLWQVFAGKDNLPFTPEELWSEVKTSFPADLTRQSLYLQDAVFNQYHSETELLRYLHQLESKDLALNTSMIPLGSCTMKLNATAEMMPVTWPEFGKIHPFAPAGQTEGYQILFAQLEAWLGEITGFDAISLQPNAGSQGEYAGLQVIRQYHLSRGEEQRNICLIPESAHGTNPASAVMCGMQVVPVKCDGEGNIDVEDLTSKAEKYGDRLAALMVTYPSTHGVFEATIGTICDIVHRFGGEVYMDGANMNAQVGLCRPADFGADVCHLNLHKTFCIPHGGGGPGMGPIGVKSHLQAFLPRTSLNSTAELQAEDQSIGMISAAPYGSASILVISWMYIAMMGPQGLTKATEVAILSANYMAKRLENYYPILFRGNNELVAHECILDLRPLKKQAAIEVEDVAKRLMDFGFHAPTVSWPVLGTMMVEPTESESLGELDRFCDAMIAIYQEAQAITHGEIDPADNPLKNAPHTAQSLICGEWNHPYSQEEAAYPAPWTKQFKFWPAVGRINNTYGDRHLVCSCEGMEAYKEG.

The residue at position 726 (lysine 726) is an N6-(pyridoxal phosphate)lysine.

This sequence belongs to the GcvP family. In terms of assembly, the glycine cleavage system is composed of four proteins: P, T, L and H. Requires pyridoxal 5'-phosphate as cofactor.

It catalyses the reaction N(6)-[(R)-lipoyl]-L-lysyl-[glycine-cleavage complex H protein] + glycine + H(+) = N(6)-[(R)-S(8)-aminomethyldihydrolipoyl]-L-lysyl-[glycine-cleavage complex H protein] + CO2. The glycine cleavage system catalyzes the degradation of glycine. The P protein binds the alpha-amino group of glycine through its pyridoxal phosphate cofactor; CO(2) is released and the remaining methylamine moiety is then transferred to the lipoamide cofactor of the H protein. The polypeptide is Glycine dehydrogenase (decarboxylating) (Synechocystis sp. (strain ATCC 27184 / PCC 6803 / Kazusa)).